The sequence spans 247 residues: ATP synthase subunit a, chloroplastic (247 aa).

Helical transmembrane passes span 38–58 (QVLITSWVVIAILLGSASIAV), 95–115 (VPFIGTMFLFIFVSNWSGALL), 134–154 (INTTVALALLTSVAYFYAGLT), 199–219 (LVVVVLVSLVPLVVPIPVMFL), and 220–240 (GLFTSGIQALIFATLAAAYIG).

This sequence belongs to the ATPase A chain family. F-type ATPases have 2 components, CF(1) - the catalytic core - and CF(0) - the membrane proton channel. CF(1) has five subunits: alpha(3), beta(3), gamma(1), delta(1), epsilon(1). CF(0) has four main subunits: a, b, b' and c.

The protein resides in the plastid. It localises to the chloroplast thylakoid membrane. Functionally, key component of the proton channel; it plays a direct role in the translocation of protons across the membrane. The sequence is that of ATP synthase subunit a, chloroplastic from Eucalyptus globulus subsp. globulus (Tasmanian blue gum).